A 209-amino-acid polypeptide reads, in one-letter code: Probable GTP-binding protein EngB (209 aa).

Positions 22–198 (TPLEIAFVGR…NRTVGSWLDA (177 aa)) constitute an EngB-type G domain. Mg(2+) is bound by residues Ser37 and Thr59.

This sequence belongs to the TRAFAC class TrmE-Era-EngA-EngB-Septin-like GTPase superfamily. EngB GTPase family. Mg(2+) is required as a cofactor.

Its function is as follows. Necessary for normal cell division and for the maintenance of normal septation. The polypeptide is Probable GTP-binding protein EngB (Neisseria meningitidis serogroup B (strain ATCC BAA-335 / MC58)).